A 294-amino-acid chain; its full sequence is NAD kinase (294 aa).

The active-site Proton acceptor is the D74. NAD(+) contacts are provided by residues 74–75 (DG), R79, 149–150 (NE), D179, 190–195 (TGYSMS), and A214.

This sequence belongs to the NAD kinase family. A divalent metal cation is required as a cofactor.

It is found in the cytoplasm. The enzyme catalyses NAD(+) + ATP = ADP + NADP(+) + H(+). Involved in the regulation of the intracellular balance of NAD and NADP, and is a key enzyme in the biosynthesis of NADP. Catalyzes specifically the phosphorylation on 2'-hydroxyl of the adenosine moiety of NAD to yield NADP. The protein is NAD kinase of Flavobacterium psychrophilum (strain ATCC 49511 / DSM 21280 / CIP 103535 / JIP02/86).